We begin with the raw amino-acid sequence, 610 residues long: Mitochondrial import receptor subunit TOM70 (610 aa).

Position 2 is an N-acetylalanine (Ala2). Topologically, residues 2–41 (AASKPVEAAMAAAAAPASGNGVGSSGGTAAPGSGAGTLPR) are mitochondrial intermembrane. Residues 42–62 (WHVALAIGAPLLLGAGAMYLW) form a helical membrane-spanning segment. The Cytoplasmic portion of the chain corresponds to 63–610 (SRRRRRREAG…KKYGLKPPTL (548 aa)). A disordered region spans residues 69–109 (REAGGRGDASGLKRNSERKTPEGRASPALGSGPDGSGDSLE). Position 74 is an omega-N-methylarginine (Arg74). Residues 93 to 108 (ASPALGSGPDGSGDSL) are compositionally biased toward low complexity. A phosphoserine mark is found at Ser94, Ser99, Ser104, Ser107, and Ser112. TPR repeat units follow at residues 116–149 (AQAAKNKGNKYFKAGKYEQAIQCYTEAISLCPTE) and 155–188 (STFYQNRAAAFEQLQKWKEVAQDCTKAVELNPKY). Lys187 carries the N6-acetyllysine modification. A Glycyl lysine isopeptide (Lys-Gly) (interchain with G-Cter in SUMO2) cross-link involves residue Lys277. TPR repeat units lie at residues 296 to 329 (ENSGYLKAKQYMEEENYDKIISECSKEIDAQGKY), 331 to 364 (AEALLLRATFYLLIGSANAAKPDLDKVISLKEAN), 369 to 402 (ANALIKRGTMCMQQQQPMLSTQDFNMAAEIDPMN), 403 to 436 (SDVYHHRGQLKILLDLVEEAVADFDACIRLRPKF), 444 to 477 (CFALYRQAYTANNSSQVQAAMKGFEEVIKKFPRC), 478 to 511 (AEGYALYAQALTDQQQFGKADEMYDKCIDLEPDN), 513 to 546 (TTYVHKGLLQLQWKQDLDKGLELISKAIEIDNKC), and 547 to 580 (DFAYETMGTIEVQRGNMEKAIDMFNKAINLAKSE).

This sequence belongs to the Tom70 family. As to quaternary structure, forms part of the preprotein translocase complex of the outer mitochondrial membrane (TOM complex) which consists of at least 7 different proteins (TOMM5, TOMM6, TOMM7, TOMM20, TOMM22, TOMM40 and TOMM70). Interacts with CAPN8. Interacts with TRADD, TRAF6 and STING. Interacts with MAVS. Interacts with HSPA8 and HSP90AA1; both interactions are required for preprotein mitochondrial import. The interaction with HSP90AA1 is direct and mediates the association of TOMM70 with IRF3 and TBK1. Upon mitochondrial depolarization, interacts with PINK1; the interaction is required for PINK1-TOM-TIM23 supercomplex formation which is critical for PINK1 stabilization at the outer mitochondrial membrane, kinase activation and downstream mitophagy.

It localises to the mitochondrion outer membrane. Acts as a receptor of the preprotein translocase complex of the outer mitochondrial membrane (TOM complex). Recognizes and mediates the translocation of mitochondrial preproteins from the cytosol into the mitochondria in a chaperone dependent manner. Mediates TBK1 and IRF3 activation induced by MAVS in response to Sendai virus infection and promotes host antiviral responses during virus infection. In Rattus norvegicus (Rat), this protein is Mitochondrial import receptor subunit TOM70.